A 350-amino-acid polypeptide reads, in one-letter code: E3 ubiquitin-protein ligase TRIM63 (350 aa).

The segment at 23 to 79 (CPICLEMFTKPVVILPCQHNLCRKCANDIFQAANPYWTNRGGSVSMSGGRFRCPSCR) adopts an RING-type zinc-finger fold. Residues 74–218 (RCPSCRHEVI…LSQKFDTLYA (145 aa)) form an interaction with TTN region. A B box-type zinc finger spans residues 117-159 (GSHPMCKEHEDEKINIYCLTCEVPTCSLCKVFGAHQACEVAPL). 4 residues coordinate Zn(2+): C122, H125, C145, and H151. The stretch at 207–269 (EELSQKFDTL…VETAIQSLDE (63 aa)) forms a coiled coil. Positions 267–325 (LDEPGGATFLSSAKQLIKSNVEASKGCQLGKTEQGFENMDYFTLDLEHIAEALRAIDFG) constitute a COS domain. Positions 325–344 (GTDEEEEEFTEEEADEEEGV) are enriched in acidic residues. The tract at residues 325–350 (GTDEEEEEFTEEEADEEEGVTTEGHQ) is disordered.

Homodimer. Homooligomer and heterooligomer. Interacts with SUMO2, titin/TTN and GMEB1. Interacts with TRIM54 and probably with TRIM55. Interacts with TNNI3. Forms a ternary complex with RACK1 and PRKCE. Interacts with CKM.

The protein localises to the cytoplasm. Its subcellular location is the nucleus. It localises to the myofibril. It is found in the sarcomere. The protein resides in the m line. The protein localises to the z line. The enzyme catalyses S-ubiquitinyl-[E2 ubiquitin-conjugating enzyme]-L-cysteine + [acceptor protein]-L-lysine = [E2 ubiquitin-conjugating enzyme]-L-cysteine + N(6)-ubiquitinyl-[acceptor protein]-L-lysine.. Its pathway is protein modification; protein ubiquitination. Functionally, E3 ubiquitin ligase. Mediates the ubiquitination and subsequent proteasomal degradation of CKM, GMEB1 and HIBADH. Regulates the proteasomal degradation of muscle proteins under amino acid starvation, where muscle protein is catabolized to provide other organs with amino acids. Inhibits de novo skeletal muscle protein synthesis under amino acid starvation. Regulates proteasomal degradation of cardiac troponin I/TNNI3 and probably of other sarcomeric-associated proteins. May play a role in striated muscle atrophy and hypertrophy by regulating an anti-hypertrophic PKC-mediated signaling pathway. May regulate the organization of myofibrils through TTN in muscle cells. This is E3 ubiquitin-protein ligase TRIM63 (Trim63) from Mus musculus (Mouse).